The chain runs to 469 residues: Cell division protein FtsP (469 aa).

The tat-type signal signal peptide spans 1–29; the sequence is MPRLSRRQLLKTAAISTALSTVPAPLLAA. The 59-residue stretch at 228–286 folds into the Plastocyanin-like domain; it reads IRLRLLNASLARAYDLRLDNDQEMLLIAQDLSFLPKAKSVKSLVLSPGERAEILVNMNE.

It belongs to the FtsP family. Predicted to be exported by the Tat system. The position of the signal peptide cleavage has not been experimentally proven.

It localises to the periplasm. Cell division protein that is required for growth during stress conditions. May be involved in protecting or stabilizing the divisomal assembly under conditions of stress. The sequence is that of Cell division protein FtsP from Haemophilus influenzae (strain 86-028NP).